The sequence spans 377 residues: Succinyl-diaminopimelate desuccinylase (377 aa).

H67 is a Zn(2+) binding site. Residue D69 is part of the active site. Residue D100 participates in Zn(2+) binding. E134 functions as the Proton acceptor in the catalytic mechanism. Zn(2+) contacts are provided by E135, E163, and H349.

As to quaternary structure, homodimer. Zn(2+) serves as cofactor.

The enzyme catalyses N-succinyl-(2S,6S)-2,6-diaminopimelate + H2O = (2S,6S)-2,6-diaminopimelate + succinate. It functions in the pathway amino-acid biosynthesis; L-lysine biosynthesis via DAP pathway; LL-2,6-diaminopimelate from (S)-tetrahydrodipicolinate (succinylase route): step 3/3. Competitively inhibited by L,L-DAP, D,L-DAP, 2-carboxyethylphosphonic acid (CEPA) and 5-mercaptopentanoic acid (MSPA). Succinate is a poor inhibitor. Catalyzes the hydrolysis of N-succinyl-L,L-diaminopimelic acid (SDAP), forming succinate and LL-2,6-diaminopimelate (DAP), an intermediate involved in the bacterial biosynthesis of lysine and meso-diaminopimelic acid, an essential component of bacterial cell walls. It can only hydrolyze L,L-N-succinyl-diaminopimelic acid (L,L-SDAP) and is inactive toward D,L-, L,D-, and D,D-SDAP. This chain is Succinyl-diaminopimelate desuccinylase (dapE), found in Haemophilus influenzae (strain ATCC 51907 / DSM 11121 / KW20 / Rd).